The chain runs to 456 residues: Bifunctional protein GlmU (456 aa).

The interval 1 to 230 (MDKRFAVVLA…FQETLGVNDR (230 aa)) is pyrophosphorylase. Residues 9 to 12 (LAAG), Lys-23, Gln-73, and 78 to 79 (GT) each bind UDP-N-acetyl-alpha-D-glucosamine. Asp-103 contributes to the Mg(2+) binding site. Residues Gly-140, Glu-155, Asn-170, and Asn-228 each coordinate UDP-N-acetyl-alpha-D-glucosamine. A Mg(2+)-binding site is contributed by Asn-228. Positions 231 to 251 (VALSQAEIYMKQRINKRHMQN) are linker. The N-acetyltransferase stretch occupies residues 252–456 (GVSLIDPDNT…EDYAENIHKK (205 aa)). 2 residues coordinate UDP-N-acetyl-alpha-D-glucosamine: Arg-333 and Lys-351. The active-site Proton acceptor is His-363. 2 residues coordinate UDP-N-acetyl-alpha-D-glucosamine: Tyr-366 and Asn-377. Acetyl-CoA-binding positions include 386-387 (NY), Ala-423, and Arg-440.

The protein in the N-terminal section; belongs to the N-acetylglucosamine-1-phosphate uridyltransferase family. In the C-terminal section; belongs to the transferase hexapeptide repeat family. Homotrimer. The cofactor is Mg(2+).

It is found in the cytoplasm. The enzyme catalyses alpha-D-glucosamine 1-phosphate + acetyl-CoA = N-acetyl-alpha-D-glucosamine 1-phosphate + CoA + H(+). The catalysed reaction is N-acetyl-alpha-D-glucosamine 1-phosphate + UTP + H(+) = UDP-N-acetyl-alpha-D-glucosamine + diphosphate. The protein operates within nucleotide-sugar biosynthesis; UDP-N-acetyl-alpha-D-glucosamine biosynthesis; N-acetyl-alpha-D-glucosamine 1-phosphate from alpha-D-glucosamine 6-phosphate (route II): step 2/2. Its pathway is nucleotide-sugar biosynthesis; UDP-N-acetyl-alpha-D-glucosamine biosynthesis; UDP-N-acetyl-alpha-D-glucosamine from N-acetyl-alpha-D-glucosamine 1-phosphate: step 1/1. It participates in bacterial outer membrane biogenesis; LPS lipid A biosynthesis. In terms of biological role, catalyzes the last two sequential reactions in the de novo biosynthetic pathway for UDP-N-acetylglucosamine (UDP-GlcNAc). The C-terminal domain catalyzes the transfer of acetyl group from acetyl coenzyme A to glucosamine-1-phosphate (GlcN-1-P) to produce N-acetylglucosamine-1-phosphate (GlcNAc-1-P), which is converted into UDP-GlcNAc by the transfer of uridine 5-monophosphate (from uridine 5-triphosphate), a reaction catalyzed by the N-terminal domain. This is Bifunctional protein GlmU from Bacillus licheniformis (strain ATCC 14580 / DSM 13 / JCM 2505 / CCUG 7422 / NBRC 12200 / NCIMB 9375 / NCTC 10341 / NRRL NRS-1264 / Gibson 46).